The following is a 258-amino-acid chain: Phosphate import ATP-binding protein PstB (258 aa).

The ABC transporter domain maps to 5–247 (IETKDLDIYY…ERIFSNPKEK (243 aa)). Residue 37-44 (GPSGCGKS) participates in ATP binding.

This sequence belongs to the ABC transporter superfamily. Phosphate importer (TC 3.A.1.7) family. In terms of assembly, the complex is composed of two ATP-binding proteins (PstB), two transmembrane proteins (PstC and PstA) and a solute-binding protein (PstS).

It localises to the cell membrane. The catalysed reaction is phosphate(out) + ATP + H2O = ADP + 2 phosphate(in) + H(+). In terms of biological role, part of the ABC transporter complex PstSACB involved in phosphate import. Responsible for energy coupling to the transport system. The protein is Phosphate import ATP-binding protein PstB of Cutibacterium acnes (strain DSM 16379 / KPA171202) (Propionibacterium acnes).